The following is a 157-amino-acid chain: Small ribosomal subunit protein uS7 (157 aa).

Belongs to the universal ribosomal protein uS7 family. Part of the 30S ribosomal subunit. Contacts proteins S9 and S11.

One of the primary rRNA binding proteins, it binds directly to 16S rRNA where it nucleates assembly of the head domain of the 30S subunit. Is located at the subunit interface close to the decoding center, probably blocks exit of the E-site tRNA. The chain is Small ribosomal subunit protein uS7 from Borreliella afzelii (strain PKo) (Borrelia afzelii).